The sequence spans 60 residues: Light-harvesting polypeptide B-885 alpha-2 chain (60 aa).

The Cytoplasmic portion of the chain corresponds to 1–16; sequence SAPAQWKLWLVMDPRT. The chain crosses the membrane as a helical span at residues 17–37; the sequence is VMIGTAAWLGVLALLIHFLLL. H33 serves as a coordination point for a bacteriochlorophyll. The Periplasmic segment spans residues 38 to 60; sequence GTERFNWIDTGLKEQKATAAAQA.

This sequence belongs to the antenna complex alpha subunit family. As to quaternary structure, the core complex is formed by different alpha and beta chains, binding bacteriochlorophyll molecules, and arranged most probably in tetrameric structures disposed around the reaction center. The non-pigmented gamma chains may constitute additional components.

It localises to the cell inner membrane. Functionally, antenna complexes are light-harvesting systems, which transfer the excitation energy to the reaction centers. The protein is Light-harvesting polypeptide B-885 alpha-2 chain of Rhodocyclus tenuis (Rhodospirillum tenue).